Here is a 516-residue protein sequence, read N- to C-terminus: GMP synthase [glutamine-hydrolyzing] (516 aa).

One can recognise a Glutamine amidotransferase type-1 domain in the interval 8–198 (KILILDFGSQ…VVNICGCDTL (191 aa)). Residue cysteine 84 is the Nucleophile of the active site. Active-site residues include histidine 172 and glutamate 174. In terms of domain architecture, GMPS ATP-PPase spans 199 to 391 (WNIENIIEND…LGLPYNMLYR (193 aa)). 226 to 232 (SGGVDSS) is an ATP binding site.

Homodimer.

It carries out the reaction XMP + L-glutamine + ATP + H2O = GMP + L-glutamate + AMP + diphosphate + 2 H(+). It functions in the pathway purine metabolism; GMP biosynthesis; GMP from XMP (L-Gln route): step 1/1. Its function is as follows. Catalyzes the synthesis of GMP from XMP. This is GMP synthase [glutamine-hydrolyzing] from Francisella tularensis subsp. holarctica (strain FTNF002-00 / FTA).